We begin with the raw amino-acid sequence, 142 residues long: Large ribosomal subunit protein uL11 (142 aa).

Belongs to the universal ribosomal protein uL11 family. In terms of assembly, part of the ribosomal stalk of the 50S ribosomal subunit. Interacts with L10 and the large rRNA to form the base of the stalk. L10 forms an elongated spine to which L12 dimers bind in a sequential fashion forming a multimeric L10(L12)X complex. In terms of processing, one or more lysine residues are methylated.

Forms part of the ribosomal stalk which helps the ribosome interact with GTP-bound translation factors. This is Large ribosomal subunit protein uL11 from Acinetobacter baumannii (strain AB307-0294).